The following is a 227-amino-acid chain: Peroxiredoxin-like 2A (227 aa).

The tract at residues leucine 13–valine 111 is thioredoxin fold. Active-site redox-active residues include cysteine 84 and cysteine 87.

Belongs to the peroxiredoxin-like PRXL2 family. PRXL2A subfamily.

It is found in the cytoplasm. Involved in redox regulation of the cell. Acts as an antioxidant. This chain is Peroxiredoxin-like 2A (prxl2a), found in Xenopus tropicalis (Western clawed frog).